Here is a 181-residue protein sequence, read N- to C-terminus: Large ribosomal subunit protein uL5 (181 aa).

Belongs to the universal ribosomal protein uL5 family. As to quaternary structure, part of the 50S ribosomal subunit; contacts the 5S rRNA and probably tRNA. Forms a bridge to the 30S subunit in the 70S ribosome.

This is one of the proteins that bind and probably mediate the attachment of the 5S RNA into the large ribosomal subunit, where it forms part of the central protuberance. In the 70S ribosome it contacts protein S13 of the 30S subunit (bridge B1b), connecting the 2 subunits; this bridge is implicated in subunit movement. May contact the P site tRNA; the 5S rRNA and some of its associated proteins might help stabilize positioning of ribosome-bound tRNAs. The sequence is that of Large ribosomal subunit protein uL5 from Methanococcus aeolicus (strain ATCC BAA-1280 / DSM 17508 / OCM 812 / Nankai-3).